A 521-amino-acid polypeptide reads, in one-letter code: uncharacterized protein (521 aa).

The disordered stretch occupies residues 1-25; sequence MLQRSLGVNGRKLAMSARSAKRERK. 6 helical membrane passes run 68-88, 114-134, 160-180, 192-212, 290-310, and 399-419; these read GAVW…GAVL, VLIV…SLTV, VVLA…HTVG, VAVT…IYFL, ALLV…GWCW, and LLFW…CAQI.

It is found in the cell membrane. This is an uncharacterized protein from Mycobacterium tuberculosis (strain CDC 1551 / Oshkosh).